Reading from the N-terminus, the 5206-residue chain is Multifunctional-autoprocessing repeats-in-toxin (5206 aa).

An N-terminal signal peptide occupies residues 1-19; sequence MGKPFWRSVEYFFTGNYSA. 39 RtxA repeats span residues 101 to 118, 121 to 138, 141 to 157, 161 to 184, 187 to 204, 207 to 224, 255 to 272, 275 to 291, 584 to 601, 604 to 620, 624 to 641, 644 to 658, 741 to 753, 759 to 771, 782 to 798, 801 to 816, 820 to 835, 841 to 855, 858 to 875, 877 to 891, 896 to 910, 915 to 932, 934 to 950, 972 to 984, 991 to 1006, 1031 to 1043, 1067 to 1079, 1087 to 1102, 1110 to 1122, 1125 to 1142, 1145 to 1159, 1163 to 1179, 1184 to 1199, 1201 to 1217, 1220 to 1236, 1242 to 1256, 1258 to 1275, 1296 to 1313, and 1315 to 1332; these read GAAG…GDVS, GAAA…GNVT, GAGG…QGNL, GAGA…GDVT, GAGA…GNIT, GAGA…GDIT, GVGG…GDIH, GGGA…GSSF, GAGG…GNVY, GGGI…FGNT, GGGA…GDLT, GAGL…SKQG, AGGA…VGDG, MLGG…HISG, ALGG…GNTL, MGGG…DGTT, MVGG…NGDT, GVGN…GQTL, MGAA…TSIA, MIGA…GEGN, MGGL…GNGD, MVAE…MSVA, MLAK…GTTL, MIGQ…KVGN, MVGK…DGTS, GKAN…GDGL, AAAK…HVGD, AGKG…GTTV, GNVM…GTTI, AKGK…LGVN, WGQA…DGDR, AKGE…GKEV, GKAN…DDYT, AWGK…GRNV, AKGE…GDSF, KGNI…MQVT, AKGK…LSVT, AWGK…LNVA, and MKGK…LNIN. Polar residues predominate over residues 1606 to 1626; sequence SQQANAVSEHATQNQASQNAL. Disordered stretches follow at residues 1606-1682 and 1738-1895; these read SQQA…ESEA and IAAA…EQEA. Basic and acidic residues predominate over residues 1627 to 1646; the sequence is SDKERAEADRQRLEQEKQKQ. Over residues 1652-1671 the composition is skewed to polar residues; that stretch reads GSQSQLESTDQQALGNNGQA. The span at 1778-1805 shows a compositional bias: basic and acidic residues; the sequence is AEAKADAETRKADAVAKSNDAKQAESDA. Over residues 1825–1834 the composition is skewed to polar residues; sequence NKANQAQNDA. A compositionally biased stretch (basic and acidic residues) spans 1835–1849; it reads KGTKQNEGDRPDREG. Positions 1870–1880 are enriched in polar residues; it reads SHITTDSQTNA. A membrane localization region (MLD) region spans residues 2377 to 2461; it reads ELMSVTELLD…SLLNQVNSRL (85 aa). The segment at 2537 to 2901 is rho inactivation domain (RID); the sequence is EYGQVVADTI…HQVTDVLDAL (365 aa). An ABH effector region region spans residues 2998–3113; the sequence is VVLFLHGSGS…MPSMTKAITA (116 aa). Residues 4111–4295 form the Peptidase C80 domain; that stretch reads PTADGGESRF…AENNKVSLSW (185 aa). Residues 4117–4119, 4144–4145, and arginine 4175 contribute to the 1D-myo-inositol hexakisphosphate site; these read ESR and KH. The For cysteine protease activity role is filled by histidine 4181. Serine 4226 lines the 1D-myo-inositol hexakisphosphate pocket. Cysteine 4230 acts as the Nucleophile; for cysteine protease activity in catalysis. 1D-myo-inositol hexakisphosphate is bound by residues 4259 to 4261, 4272 to 4273, lysine 4285, and lysine 4290; these read SVR and RK. 2 disordered regions span residues 4333 to 4362 and 4738 to 4779; these read GAIG…ANNK and LKEK…ETPD. Low complexity predominate over residues 4750–4762; it reads SSVSVNGASVNSA.

Requires Mg(2+) as cofactor.

Its subcellular location is the secreted. The protein localises to the host cytoplasm. The protein resides in the host cytosol. It is found in the host cell membrane. It catalyses the reaction L-lysyl-/S-(2E,6E,10E)-geranylgeranyl-L-cysteinyl-[protein] + hexadecanoyl-CoA = N(6)-hexadecanoyl-L-lysyl-/S-(2E,6E,10E)-geranylgeranyl-L-cysteinyl-[protein] + CoA + H(+). The enzyme catalyses L-lysyl-/S-(2E,6E,10E)-geranylgeranyl-L-cysteinyl-[protein] + dodecanoyl-CoA = N(6)-dodecanoyl-L-lysyl-/S-(2E,6E,10E)-geranylgeranyl-L-cysteinyl-[protein] + CoA + H(+). The catalysed reaction is L-lysyl-/S-(2E,6E,10E)-geranylgeranyl-L-cysteinyl-[protein] + decanoyl-CoA = N(6)-decanoyl-L-lysyl-/S-(2E,6E,10E)-geranylgeranyl-L-cysteinyl-[protein] + CoA + H(+). Functionally, precursor of a multifunctional toxin that causes destruction of the actin cytoskeleton by covalent cross-linking of actin and inactivation of Rho GTPases when translocated into the host cytoplasm. Upon translocation into the host cell, undergoes autoprocessing in cis mediated by the peptidase C80 domain (also named CPD domain): the protease activity is activated upon binding inositol hexakisphosphate (InsP6) present at the host cell membrane and delivers the Cysteine protease domain-containing toxin F3 chain to the host cytosol. The Cysteine protease domain-containing toxin F3 chain will then further cleave and release effector toxin chains that cause disassembly of the actin cytoskeleton and enhance V.vulnificus colonization of the small intestine, possibly by facilitating evasion of phagocytic cells. Its function is as follows. Following autocatalytic cleavage in cis, this chain mediates processing in trans to release other individual toxin chains to the host cytosol. Released effector toxin chains cause disassembly of the actin cytoskeleton and enhance V.vulnificus colonization of the small intestine, possibly by facilitating evasion of phagocytic cells. Actin-directed toxin that catalyzes the covalent cross-linking of host cytoplasmic monomeric actin. Mediates the cross-link between 'Lys-50' of one monomer and 'Glu-270' of another actin monomer, resulting in formation of highly toxic actin oligomers that cause cell rounding. The toxin can be highly efficient at very low concentrations by acting on formin homology family proteins: toxic actin oligomers bind with high affinity to formins and adversely affect both nucleation and elongation abilities of formins, causing their potent inhibition in both profilin-dependent and independent manners. Acts as an acid--amino-acid ligase that transfers the gamma-phosphoryl group of ATP to the 'Glu-270' actin residue, resulting in the formation of an activated acyl phosphate intermediate. This intermediate is further hydrolyzed and the energy of hydrolysis is utilized for the formation of the amide bond between actin subunits. In terms of biological role, N-epsilon-fatty acyltransferase that mediates lysine-palmitoylation of host Rho GTPase proteins, with a strong preference for host Rac1. After delivery to the host cytosol, localizes to the host cell membrane where it palmitoylates host Rho GTPase proteins, resulting in loss of all active GTP-bound Rho and subsequent actin depolymerization. Prenylation of host Rac1 at the C-terminus is required for lysine-palmitoylation. Functionally, indirectly activates the small GTPase CDC42. The chain is Multifunctional-autoprocessing repeats-in-toxin from Vibrio vulnificus.